Reading from the N-terminus, the 463-residue chain is Probable diacyglycerol O-acyltransferase tgs1 (463 aa).

Residue histidine 137 is the Proton acceptor of the active site.

It belongs to the long-chain O-acyltransferase family.

It carries out the reaction an acyl-CoA + a 1,2-diacyl-sn-glycerol = a triacyl-sn-glycerol + CoA. Its pathway is glycerolipid metabolism; triacylglycerol biosynthesis. In terms of biological role, catalyzes the terminal and only committed step in triacylglycerol synthesis by using diacylglycerol and fatty acyl CoA as substrates. Required for storage lipid synthesis. The chain is Probable diacyglycerol O-acyltransferase tgs1 (tgs1) from Mycobacterium tuberculosis (strain CDC 1551 / Oshkosh).